The sequence spans 152 residues: Deoxyuridine 5'-triphosphate nucleotidohydrolase (152 aa).

Substrate contacts are provided by residues 71–73 (RSG), Asn-84, 88–90 (LID), and Met-98.

This sequence belongs to the dUTPase family. Requires Mg(2+) as cofactor.

The catalysed reaction is dUTP + H2O = dUMP + diphosphate + H(+). It functions in the pathway pyrimidine metabolism; dUMP biosynthesis; dUMP from dCTP (dUTP route): step 2/2. In terms of biological role, this enzyme is involved in nucleotide metabolism: it produces dUMP, the immediate precursor of thymidine nucleotides and it decreases the intracellular concentration of dUTP so that uracil cannot be incorporated into DNA. This chain is Deoxyuridine 5'-triphosphate nucleotidohydrolase, found in Salmonella agona (strain SL483).